An 89-amino-acid chain; its full sequence is Ubiquinol-cytochrome-c reductase complex assembly factor 3 (89 aa).

At 1–7 (MEVARKA) the chain is on the mitochondrial matrix side. The helical transmembrane segment at 8–28 (LVAVAVLGGGAGVGSILFALV) threads the bilayer. Residues 23–80 (ILFALVTPGELQKQSMLQEMPERDSRRRDEAVRTTELVMATLKDAAATKENVAWRRNW) are mediates lipid-binding. The Mitochondrial intermembrane segment spans residues 29–89 (TPGELQKQSM…WTVSGDGRSA (61 aa)).

Belongs to the UQCC3 family. In terms of assembly, associates with the ubiquinol-cytochrome c reductase complex (mitochondrial respiratory chain complex III(CIII) or cytochrome b-c1 complex). Interacts with UQCC1. Forms a complex, named COMC, composed of UQCC1, UQCC2; UQCC3 and UQCC4; mediates MT-CYB hemylation and association with the first nuclear-encoded complex III subunit UQCRQ. Post-translationally, probably cleaved by OMA1 under mitochondrial stress conditions.

The protein localises to the mitochondrion inner membrane. In terms of biological role, required for the assembly of the ubiquinol-cytochrome c reductase complex (mitochondrial respiratory chain complex III or cytochrome b-c1 complex), mediating cytochrome b recruitment and probably stabilization within the complex. Thereby, plays an important role in ATP production by mitochondria. Cardiolipin-binding protein, it may also control the cardiolipin composition of mitochondria membranes and their morphology. The polypeptide is Ubiquinol-cytochrome-c reductase complex assembly factor 3 (Mus musculus (Mouse)).